Here is a 385-residue protein sequence, read N- to C-terminus: S-adenosylmethionine synthase (385 aa).

His-16 contacts ATP. Mg(2+) is bound at residue Asp-18. Position 44 (Glu-44) interacts with K(+). L-methionine contacts are provided by Glu-57 and Gln-100. Positions 100–110 (QSPDINQGVDR) are flexible loop. ATP is bound by residues 164 to 166 (DGK), 230 to 231 (KF), Asp-239, 245 to 246 (RK), Ala-262, and Lys-266. An L-methionine-binding site is contributed by Asp-239. L-methionine is bound at residue Lys-270.

It belongs to the AdoMet synthase family. In terms of assembly, homotetramer; dimer of dimers. Requires Mg(2+) as cofactor. K(+) serves as cofactor.

It localises to the cytoplasm. The enzyme catalyses L-methionine + ATP + H2O = S-adenosyl-L-methionine + phosphate + diphosphate. Its pathway is amino-acid biosynthesis; S-adenosyl-L-methionine biosynthesis; S-adenosyl-L-methionine from L-methionine: step 1/1. Functionally, catalyzes the formation of S-adenosylmethionine (AdoMet) from methionine and ATP. The overall synthetic reaction is composed of two sequential steps, AdoMet formation and the subsequent tripolyphosphate hydrolysis which occurs prior to release of AdoMet from the enzyme. This chain is S-adenosylmethionine synthase, found in Helicobacter pylori (strain P12).